Reading from the N-terminus, the 376-residue chain is WW domain-binding protein 4 (376 aa).

A Matrin-type zinc finger spans residues 11-42 (KFCDYCKCWIADNRPSVEFHERGKNHKENVAR). Over residues 94 to 111 (PTVSPVISTVQPTPTSNQ) the composition is skewed to polar residues. Disordered stretches follow at residues 94 to 127 (PTVS…ASKG) and 192 to 324 (WEKP…ECLS). Basic residues predominate over residues 114–123 (EKKKKKKKKE). WW domains are found at residues 123 to 156 (EASK…KPEG) and 164 to 197 (TAAK…KPED). A compositionally biased stretch (basic and acidic residues) spans 219–272 (EDAKSSDSHSDSEGEQKKAGEASTETKKLIIKFKEKNKSTEKRIGPEIQKEKST). Residues serine 228 and serine 230 each carry the phosphoserine modification. Positions 357-375 (KKRRLENGKSRNLRQRGDD) are interaction with SNRNP200.

Component of the spliceosome B complex. Associated with U2 snRNPs. Binds splicing factors SNRPB, SNRPC and SF1. Interacts via the WW domains with the Pro-rich domains of KHDRBS1/SAM68. Interacts via the WW domains with the Pro-rich domains of WBP11. Interacts with SNRNP200.

The protein resides in the nucleus. The protein localises to the nucleus speckle. Functionally, involved in pre-mRNA splicing as a component of the spliceosome. May play a role in cross-intron bridging of U1 and U2 snRNPs in the mammalian A complex. The protein is WW domain-binding protein 4 (Wbp4) of Mus musculus (Mouse).